A 601-amino-acid chain; its full sequence is Elongation factor 4 (601 aa).

A tr-type G domain is found at 7-189 (DRIRNFSIIA…ALVTRLPAPK (183 aa)). GTP-binding positions include 19–24 (DHGKST) and 136–139 (NKVD).

The protein belongs to the TRAFAC class translation factor GTPase superfamily. Classic translation factor GTPase family. LepA subfamily.

Its subcellular location is the cell inner membrane. It catalyses the reaction GTP + H2O = GDP + phosphate + H(+). Required for accurate and efficient protein synthesis under certain stress conditions. May act as a fidelity factor of the translation reaction, by catalyzing a one-codon backward translocation of tRNAs on improperly translocated ribosomes. Back-translocation proceeds from a post-translocation (POST) complex to a pre-translocation (PRE) complex, thus giving elongation factor G a second chance to translocate the tRNAs correctly. Binds to ribosomes in a GTP-dependent manner. This chain is Elongation factor 4, found in Granulibacter bethesdensis (strain ATCC BAA-1260 / CGDNIH1).